The sequence spans 507 residues: Alkyl hydroperoxide reductase subunit F (507 aa).

Residue 207–222 (DVLIVGGGPASGSAAI) coordinates FAD. A disulfide bridge links C335 with C338. 347-361 (DVAVIGGGNSGVEAA) serves as a coordination point for NAD(+). 467 to 477 (TNVPGIFAAGD) is a binding site for FAD.

This sequence belongs to the class-II pyridine nucleotide-disulfide oxidoreductase family. As to quaternary structure, homodimer. It depends on FAD as a cofactor.

Its function is as follows. Serves to protect the cell against DNA damage by alkyl hydroperoxides. It can use either NADH or NADPH as electron donor for direct reduction of redox dyes or of alkyl hydroperoxides when combined with the AhpC protein. The polypeptide is Alkyl hydroperoxide reductase subunit F (ahpF) (Staphylococcus epidermidis (strain ATCC 35984 / DSM 28319 / BCRC 17069 / CCUG 31568 / BM 3577 / RP62A)).